Here is a 514-residue protein sequence, read N- to C-terminus: Pantetheinase (514 aa).

The first 22 residues, 1-22 (MITSRLLVYVAVLVLCVIKVSS), serve as a signal peptide directing secretion. Asn-39 carries N-linked (GlcNAc...) asparagine glycosylation. Residues 40–307 (ATLVPVSHEE…GKLLLSQLDS (268 aa)) enclose the CN hydrolase domain. Catalysis depends on Glu-80, which acts as the Proton acceptor. Residues Asn-87 and Asn-147 are each glycosylated (N-linked (GlcNAc...) asparagine). Catalysis depends on Lys-179, which acts as the Proton donor. The active-site Nucleophile is the Cys-212. Residues Asn-316 and Asn-354 are each glycosylated (N-linked (GlcNAc...) asparagine). A lipid anchor (GPI-anchor amidated aspartate) is attached at Asp-492. Positions 493–514 (PRSQVPGVMLLVIIPIVCSLSW) are cleaved as a propeptide — removed in mature form.

The protein belongs to the carbon-nitrogen hydrolase superfamily. BTD/VNN family. As to quaternary structure, monomer.

It localises to the cell membrane. The enzyme catalyses (R)-pantetheine + H2O = cysteamine + (R)-pantothenate. In terms of biological role, amidohydrolase that hydrolyzes specifically one of the carboamide linkages in D-pantetheine thus recycling pantothenic acid (vitamin B5) and releasing cysteamine. In Canis lupus familiaris (Dog), this protein is Pantetheinase (VNN1).